Consider the following 84-residue polypeptide: Small ribosomal subunit protein bS20 (84 aa).

This sequence belongs to the bacterial ribosomal protein bS20 family.

Functionally, binds directly to 16S ribosomal RNA. The polypeptide is Small ribosomal subunit protein bS20 (Ligilactobacillus salivarius (strain UCC118) (Lactobacillus salivarius)).